A 287-amino-acid chain; its full sequence is Phosphatidylserine decarboxylase proenzyme (287 aa).

Active-site charge relay system; for autoendoproteolytic cleavage activity residues include aspartate 89, histidine 146, and serine 252. Catalysis depends on serine 252, which acts as the Schiff-base intermediate with substrate; via pyruvic acid; for decarboxylase activity. A Pyruvic acid (Ser); by autocatalysis modification is found at serine 252.

The protein belongs to the phosphatidylserine decarboxylase family. PSD-B subfamily. Prokaryotic type I sub-subfamily. In terms of assembly, heterodimer of a large membrane-associated beta subunit and a small pyruvoyl-containing alpha subunit. It depends on pyruvate as a cofactor. Post-translationally, is synthesized initially as an inactive proenzyme. Formation of the active enzyme involves a self-maturation process in which the active site pyruvoyl group is generated from an internal serine residue via an autocatalytic post-translational modification. Two non-identical subunits are generated from the proenzyme in this reaction, and the pyruvate is formed at the N-terminus of the alpha chain, which is derived from the carboxyl end of the proenzyme. The autoendoproteolytic cleavage occurs by a canonical serine protease mechanism, in which the side chain hydroxyl group of the serine supplies its oxygen atom to form the C-terminus of the beta chain, while the remainder of the serine residue undergoes an oxidative deamination to produce ammonia and the pyruvoyl prosthetic group on the alpha chain. During this reaction, the Ser that is part of the protease active site of the proenzyme becomes the pyruvoyl prosthetic group, which constitutes an essential element of the active site of the mature decarboxylase.

Its subcellular location is the cell membrane. It carries out the reaction a 1,2-diacyl-sn-glycero-3-phospho-L-serine + H(+) = a 1,2-diacyl-sn-glycero-3-phosphoethanolamine + CO2. The protein operates within phospholipid metabolism; phosphatidylethanolamine biosynthesis; phosphatidylethanolamine from CDP-diacylglycerol: step 2/2. In terms of biological role, catalyzes the formation of phosphatidylethanolamine (PtdEtn) from phosphatidylserine (PtdSer). This chain is Phosphatidylserine decarboxylase proenzyme, found in Shewanella woodyi (strain ATCC 51908 / MS32).